The sequence spans 757 residues: Probable ubiquitin carboxyl-terminal hydrolase MINDY-4 (757 aa).

Disordered stretches follow at residues 152–173 (FVSSKRPPHKSKPMQTVPGETP) and 190–334 (SLDV…LPGG). The segment covering 190–201 (SLDVKRMGENSR) has biased composition (basic and acidic residues). Ser-219 and Ser-223 each carry phosphoserine. Residues 232-242 (SSPSSSSTQPQ) show a composition bias toward low complexity. Polar residues predominate over residues 254 to 277 (CTQQDILASSNSSPSRTSLGQLSE). Ser-289 bears the Phosphoserine mark. Basic and acidic residues predominate over residues 299–310 (PPWDRARPRDPS). Cys-456 acts as the Nucleophile in catalysis. His-677 acts as the Proton acceptor in catalysis.

The protein belongs to the MINDY deubiquitinase family. FAM188 subfamily.

It catalyses the reaction Thiol-dependent hydrolysis of ester, thioester, amide, peptide and isopeptide bonds formed by the C-terminal Gly of ubiquitin (a 76-residue protein attached to proteins as an intracellular targeting signal).. Functionally, probable hydrolase that can remove 'Lys-48'-linked conjugated ubiquitin from proteins. In Homo sapiens (Human), this protein is Probable ubiquitin carboxyl-terminal hydrolase MINDY-4.